The following is a 393-amino-acid chain: DNA polymerase processivity factor (393 aa).

Disordered regions lie at residues 25–50 (EMERGSRDHHRDHRDHREHRETREPP), 311–339 (ESRFERMGKQDDGKGDRSHKNDDGSALAS), and 355–393 (KNGTAGSSLFNEKEDSESDDSMHFDYSSNPNPKRQRCVV). A compositionally biased stretch (basic residues) spans 31-41 (RDHHRDHRDHR). Over residues 311-333 (ESRFERMGKQDDGKGDRSHKNDD) the composition is skewed to basic and acidic residues.

Belongs to the herpesviridae polymerase accessory protein family.

Functionally, accessory subunit of the DNA polymerase that acts to increase the processivity of polymerization. The polypeptide is DNA polymerase processivity factor (U27) (Human herpesvirus 6A (strain Uganda-1102) (HHV-6 variant A)).